Consider the following 477-residue polypeptide: Ribulose bisphosphate carboxylase large chain (477 aa).

Positions 1–2 are excised as a propeptide; that stretch reads MS. Proline 3 is modified (N-acetylproline). Substrate contacts are provided by asparagine 123 and threonine 173. Catalysis depends on lysine 175, which acts as the Proton acceptor. Residue lysine 177 coordinates substrate. Mg(2+) contacts are provided by lysine 201, aspartate 203, and glutamate 204. Lysine 201 bears the N6-carboxylysine mark. Catalysis depends on histidine 294, which acts as the Proton acceptor. Residues arginine 295, histidine 327, and serine 379 each coordinate substrate.

The protein belongs to the RuBisCO large chain family. Type I subfamily. In terms of assembly, heterohexadecamer of 8 large chains and 8 small chains; disulfide-linked. The disulfide link is formed within the large subunit homodimers. Mg(2+) serves as cofactor. In terms of processing, the disulfide bond which can form in the large chain dimeric partners within the hexadecamer appears to be associated with oxidative stress and protein turnover.

Its subcellular location is the plastid. The protein resides in the chloroplast. The enzyme catalyses 2 (2R)-3-phosphoglycerate + 2 H(+) = D-ribulose 1,5-bisphosphate + CO2 + H2O. It carries out the reaction D-ribulose 1,5-bisphosphate + O2 = 2-phosphoglycolate + (2R)-3-phosphoglycerate + 2 H(+). Its function is as follows. RuBisCO catalyzes two reactions: the carboxylation of D-ribulose 1,5-bisphosphate, the primary event in carbon dioxide fixation, as well as the oxidative fragmentation of the pentose substrate in the photorespiration process. Both reactions occur simultaneously and in competition at the same active site. The protein is Ribulose bisphosphate carboxylase large chain of Avena sativa (Oat).